Here is a 397-residue protein sequence, read N- to C-terminus: L-cysteine desulfidase (397 aa).

C23 functions as the Proton acceptor in the catalytic mechanism. 3 residues coordinate [4Fe-4S] cluster: C288, C330, and C337.

Belongs to the L-cysteine desulfidase family. As to quaternary structure, homotrimer. Requires [4Fe-4S] cluster as cofactor.

The enzyme catalyses L-cysteine + H2O = hydrogen sulfide + pyruvate + NH4(+) + H(+). In terms of biological role, catalyzes the cleavage of L-cysteine to form 2-aminoprop-2-enoate and sulfide. The former then spontaneously hydrolyzes to pyruvate and NH(3). May be responsible for the production of sulfide required for the biosynthesis of iron-sulfur centers in this archaea. This chain is L-cysteine desulfidase, found in Methanococcus maripaludis (strain C7 / ATCC BAA-1331).